A 1677-amino-acid chain; its full sequence is MEVPEPTCPAPPARDQPAPTPGPPGAPGGQASPHLTLGPVLLPPEQGLAPPTVFLKALPIPLYHTVPPGGLQPRAPLVTGSLDGGNVPFILSPVLQPEGPGPTQVGKPAAPTLTVNIVGTLPVLSPGLGPTLGSPGKVRNAGKYLCPHCGRDCLKPSVLEKHIRSHTGERPFPCATCGIAFKTQSNLYKHRRTQTHLNNSRLSSESEGAGGGLLEEGDKAGEPPRPEGRGESRCQGMHEGASERPLSPGAHVPLLAKNLDVRTEAAPCPGSAFADREAPWDSAPMASPGLPAASTQPWRKLPEQKSPTAGKPCALQRQQATAAEKPWDAKAPEGRLRKCESTDSGYLSRSDSAEQPHAPCSPLHSLSEHSAESEGEGGPGPGPGVAGAEPGAREAGLELEKKRLEERIAQLISHNQAVVDDAQLDNVRPRKTGLSKQGSIDLPTPYTYKDSFHFDIRALEPGRRRAPGPVRSTWTPPDKSRPLFFHSVPTQLSTTVECVPVTRSNSLPFVEGSRTWLEPREPRDPWSRTQKPLSPRPGPARLGCRSGLSSTDVPSGHPRALVRQAAVEDLPGTPIGDALVPAEDTDAKRTAAREAMAGKGRAGGRKCGQRRLKMFSQEKWQVYGDETFKRIYQKMKASPHGGKKAREVGMGSGAELGFPLQKEAAGSSGTVPTQDRRTPVHEDISAGATPEPWGNPPALEASLVTEPTKHGETVARRGDSDRPRVEEAVSSPALGGRDSPCSGSRSPLVSPNGRLELGWQMPPAPGPLKGGDVEAPRPVWPDPKLEGGARGVGDVQETCLWAQTVLRWPSRGSGEDKLPSERKKLKVEDLHSWKQPEPVSAETPGGPTQPASLSSQKQDADPGEVPGGSKESARQVGEPLESSGASLAAASVALKRVGPRDKATPLHPAAPAPAEHPSLATPPQAPRVLSALADNAFSPKYLLRLPQAETPLPLPIPWGPRHSQDSLCSSGWPEERASFVGSGLGTPLSPSPASGPSPGEADSILEDPSCSRPQDGRKGAQLGGDKGDRMATSRPAARELPISAPGAPREATSSPPTPTCEAHLVQDMEGDSHRIHRLCMGSTLARARLSGDVLNPWVPNWELGEPPGNAPEDPSSGPLVGPDPCSPLQPGSFLTALTRPQGVPPGWPELALSSHSGTSRSHSTRSPHSTQNPFPSLKAEPRLTWCCLSRSVPLPAEQKAKAASVYLAVHFPGSSLRDEGPNGPPGSNGGWTWTSPGEGGPAQMSKFSYPTVPGVMPQHQVSEPEWKKGLPWRAKMSRGNSKQRKLKINPKRYKGNFLQSCVQLRASRLRTPTWVRRRSRHPPALEGLKPCRTPGQTSSEIAGLNLQEEPSCATSESPPCCGKEEKKEGDCRQTLGTLSLGTSSRIVREMDKRTVKDISPSAGEHGDCTTHSTAATSGLSLQSDTCLAVVNDVPLPPGKGLDLGLLETQLLASQDSVSTDPKPYIFSDAQRPSSFGSKGTFPHHDIATSVAAVCISLPVRTDHIAQEIHSAESRDHSQTAGRTLTSSSPDSKVTEEGRAQTLLPGRPSSGQRISDSVPLESTEKTHLEIPASGPSSASSHHKEGRHKTFFPSRGQYGCGEMTVPCPSLGSDGRKRQVSGLITRKDSVVPSKPEQPIEIPEAPSKSLKKRSLEGMRKQTRVEFSDTSSDDEDRLVIEI.

Residues 1–26 are compositionally biased toward pro residues; it reads MEVPEPTCPAPPARDQPAPTPGPPGA. The disordered stretch occupies residues 1–43; the sequence is MEVPEPTCPAPPARDQPAPTPGPPGAPGGQASPHLTLGPVLLP. C2H2-type zinc fingers lie at residues 144-166 and 172-196; these read YLCP…IRSH and FPCA…TQTH. Disordered regions lie at residues 193 to 250, 270 to 398, 516 to 557, 663 to 931, 950 to 1062, 1100 to 1119, 1137 to 1176, 1216 to 1243, 1510 to 1597, and 1620 to 1677; these read TQTH…SPGA, GSAF…AGLE, WLEP…PSGH, EAAG…VLSA, TPLP…TCEA, NWEL…SGPL, LTRP…PFPS, LRDE…GPAQ, SAES…GQYG, and LITR…VIEI. Basic and acidic residues-rich tracts occupy residues 216–232 and 325–341; these read EGDK…RGES and KPWD…KCES. The segment covering 376–385 has biased composition (gly residues); it reads EGGPGPGPGV. Residues 391–423 are a coiled coil; it reads GAREAGLELEKKRLEERIAQLISHNQAVVDDAQ. Basic and acidic residues-rich tracts occupy residues 517–526, 674–684, 707–727, and 813–834; these read LEPREPRDPW, QDRRTPVHEDI, PTKH…RVEE, and SGED…HSWK. Low complexity-rich tracts occupy residues 880 to 894 and 905 to 919; these read LESS…SVAL and PLHP…HPSL. The segment covering 1153–1170 has biased composition (low complexity); it reads SSHSGTSRSHSTRSPHST. Residues 1518-1531 show a composition bias toward polar residues; sequence QTAGRTLTSSSPDS. Residues 1649–1662 are compositionally biased toward basic and acidic residues; that stretch reads RSLEGMRKQTRVEF.

In Homo sapiens (Human), this protein is Zinc finger protein 831 (ZNF831).